A 544-amino-acid chain; its full sequence is Membrane protein insertase YidC (544 aa).

The chain crosses the membrane as a helical span at residues 6 to 26 (NILLIGLLFVSFLLWQQWQAD). Residues 34–58 (AAQTQSSIPASTVADSHSSDVPDAD) form a disordered region. The span at 39-49 (SSIPASTVADS) shows a compositional bias: polar residues. A run of 4 helical transmembrane segments spans residues 345-365 (LLMF…LITL), 423-443 (GGCL…WVLL), 460-480 (LSVQ…MFVM), and 503-523 (VIFT…WLVG).

It belongs to the OXA1/ALB3/YidC family. Type 1 subfamily. As to quaternary structure, interacts with the Sec translocase complex via SecD. Specifically interacts with transmembrane segments of nascent integral membrane proteins during membrane integration.

It is found in the cell inner membrane. In terms of biological role, required for the insertion and/or proper folding and/or complex formation of integral membrane proteins into the membrane. Involved in integration of membrane proteins that insert both dependently and independently of the Sec translocase complex, as well as at least some lipoproteins. Aids folding of multispanning membrane proteins. This is Membrane protein insertase YidC from Shewanella halifaxensis (strain HAW-EB4).